Consider the following 369-residue polypeptide: DNA replication and repair protein RecF (369 aa).

Residue 30-37 (GDNGSGKT) coordinates ATP.

It belongs to the RecF family.

It is found in the cytoplasm. In terms of biological role, the RecF protein is involved in DNA metabolism; it is required for DNA replication and normal SOS inducibility. RecF binds preferentially to single-stranded, linear DNA. It also seems to bind ATP. This Pseudomonas aeruginosa (strain LESB58) protein is DNA replication and repair protein RecF.